A 270-amino-acid polypeptide reads, in one-letter code: UPF0354 protein BPUM_2629 (270 aa).

This sequence belongs to the UPF0354 family.

This is UPF0354 protein BPUM_2629 from Bacillus pumilus (strain SAFR-032).